The sequence spans 121 residues: Ribosome-binding factor A (121 aa).

The protein belongs to the RbfA family. Monomer. Binds 30S ribosomal subunits, but not 50S ribosomal subunits or 70S ribosomes.

The protein resides in the cytoplasm. Its function is as follows. One of several proteins that assist in the late maturation steps of the functional core of the 30S ribosomal subunit. Associates with free 30S ribosomal subunits (but not with 30S subunits that are part of 70S ribosomes or polysomes). Required for efficient processing of 16S rRNA. May interact with the 5'-terminal helix region of 16S rRNA. The protein is Ribosome-binding factor A of Heliobacterium modesticaldum (strain ATCC 51547 / Ice1).